Consider the following 434-residue polypeptide: F-box/LRR-repeat protein 21 (434 aa).

One can recognise an F-box domain in the interval arginine 39 to phenylalanine 85. LRR repeat units lie at residues leucine 140–histidine 165, aspartate 187–serine 213, cysteine 214–tyrosine 239, leucine 242–valine 265, glycine 322–alanine 347, glycine 349–glutamate 374, and cysteine 375–glutamate 400.

In terms of assembly, part of the SCF (SKP1-CUL1-F-box) E3 ubiquitin-protein ligase complex SCF(FBXL21) composed of CUL1, SKP1, RBX1 and FBXL21. Interacts with CRY2. Interacts with CRY1. Expressed in the adenohypophysis, hypothalamus (especially in the suprachiasmatic nucleus or nuclei, SCN) and pineal, all neuroendocrine structures associated with timing and homeostasis.

Its subcellular location is the cytoplasm. The protein resides in the cytosol. The protein localises to the nucleus. It functions in the pathway protein modification; protein ubiquitination. In terms of biological role, substrate-recognition component of the SCF(FBXL21) E3 ubiquitin ligase complex involved in circadian rhythm function. Plays a key role in the maintenance of both the speed and the robustness of the circadian clock oscillation. The SCF(FBXL21) complex mainly acts in the cytosol and mediates ubiquitination of CRY proteins (CRY1 and CRY2), leading to CRY proteins stabilization. The SCF(FBXL21) complex counteracts the activity of the SCF(FBXL3) complex and protects CRY proteins from degradation. Involved in the hypothalamic suprachiasmatic nucleus (SCN) clock regulating temporal organization of the daily activities. The polypeptide is F-box/LRR-repeat protein 21 (Fbxl21) (Ovis aries (Sheep)).